A 192-amino-acid polypeptide reads, in one-letter code: Cysteine and glycine-rich protein 1 (192 aa).

Positions 10 to 61 (CGVCQKAVYFAEEVQCEGSSFHKSCFLCMVCKKNLDSTTVAVHGDEIYCKSC) constitute an LIM zinc-binding 1 domain. Positions 64-69 (KKYGPK) match the Nuclear localization signal motif. Residues 118-169 (CPRCGQAVYAAEKVIGAGKSWHKSCFRCAKCGKSLESTTLADKDGEIYCKGC) form the LIM zinc-binding 2 domain.

In terms of assembly, probable monomer. Interacts with ZYX. Most prominent in tissues that are enriched in smooth muscle cells, such as gizzard, stomach, and intestine. Lower level in the heart, no expression in liver, skeletal muscle, or brain.

It localises to the nucleus. It is found in the cytoplasm. The protein localises to the cytoskeleton. Heat stable protein, that interacts with zyxin/ZYX. May be a component of a signal transduction pathway that mediates adhesion-stimulated changes in gene expression. The polypeptide is Cysteine and glycine-rich protein 1 (CSRP1) (Gallus gallus (Chicken)).